The chain runs to 394 residues: Phosphoglycerate kinase (394 aa).

Residues 21-23 (DFN), Arg36, 59-62 (HLGR), Arg118, and Arg151 contribute to the substrate site. Ser183 carries the post-translational modification Phosphoserine. An ATP-binding site is contributed by Lys201. Thr299 carries the phosphothreonine modification. ATP-binding positions include Glu323 and 350–353 (GGDS).

Belongs to the phosphoglycerate kinase family. In terms of assembly, monomer.

It is found in the cytoplasm. The catalysed reaction is (2R)-3-phosphoglycerate + ATP = (2R)-3-phospho-glyceroyl phosphate + ADP. It participates in carbohydrate degradation; glycolysis; pyruvate from D-glyceraldehyde 3-phosphate: step 2/5. In Bacillus subtilis (strain 168), this protein is Phosphoglycerate kinase (pgk).